The sequence spans 410 residues: Protein LTV1 homolog (410 aa).

2 disordered regions span residues 142 to 165 (VYRS…DEMY) and 325 to 378 (EMDI…ARKL). Composition is skewed to acidic residues over residues 151–165 (DSEE…DEMY) and 325–345 (EMDI…DDDK). Residues 357-366 (PKNETPEQRS) show a composition bias toward basic and acidic residues. A coiled-coil region spans residues 363-389 (EQRSLRKKAVKEARKLRRVEKKANKTM). Residues 367-378 (LRKKAVKEARKL) are compositionally biased toward basic residues.

This sequence belongs to the LTV1 family.

The chain is Protein LTV1 homolog from Caenorhabditis elegans.